The primary structure comprises 57 residues: Small ribosomal subunit protein bS21B (57 aa).

The interval 37–57 is disordered; it reads RYEKPSARRKRKAEAARKRRR. The span at 43–57 shows a compositional bias: basic residues; the sequence is ARRKRKAEAARKRRR.

Belongs to the bacterial ribosomal protein bS21 family.

This chain is Small ribosomal subunit protein bS21B, found in Gloeobacter violaceus (strain ATCC 29082 / PCC 7421).